Consider the following 388-residue polypeptide: Cytochrome b (388 aa).

Transmembrane regions (helical) follow at residues 38–58 (FGCL…FLAM), 82–104 (WLLR…LHIF), 119–139 (VWCL…IGYV), and 185–205 (FFSL…LHLA). Residues histidine 88 and histidine 102 each contribute to the heme b site. Heme b is bound by residues histidine 189 and histidine 203. Histidine 208 lines the a ubiquinone pocket. 4 consecutive transmembrane segments (helical) span residues 231–251 (FYVK…IWIF), 295–315 (AGGV…PFFK), 327–347 (IHQG…WIGC), and 354–373 (FVTI…AITP).

The protein belongs to the cytochrome b family. In terms of assembly, the main subunits of complex b-c1 are: cytochrome b, cytochrome c1 and the Rieske protein. Heme b is required as a cofactor.

It is found in the mitochondrion inner membrane. Component of the ubiquinol-cytochrome c reductase complex (complex III or cytochrome b-c1 complex) that is part of the mitochondrial respiratory chain. The b-c1 complex mediates electron transfer from ubiquinol to cytochrome c. Contributes to the generation of a proton gradient across the mitochondrial membrane that is then used for ATP synthesis. The protein is Cytochrome b (MT-CYB) of Zea mays (Maize).